The chain runs to 416 residues: MFILLVLVTGVSAFTTPAVVHTGRVSESPVTSEKHPVLGDDCWFRGRDFKSELRLEGEPVVLRCPLVPHSDTSSSSRSLLTWSKSDSSQLIPGDEPRMWVKDDTLWVLPAVQQDSGTYICTFRNASHCEQMSLELKVFKNTEASFPLVSYLQISALSSTGLLVCPDLKEFISSRTDGKIQWYKGSILLDKGNKKFLSAGDPTRLLISNTSMGDAGYYRCVMTFTYEGKEYNITRNIELRVKGITTEPIPVIISPLETIPASLGSRLIVPCKVFLGTGTSSNTIVWWMANSTFISVAYPRGRVTEGLHHQYSENDENYVEVSLIFDPVTKEDLNTDFKCVATNPRSFQSLHTTVKEVSSTFSWGIALAPLSLIILVVGAIWIRRRCKRQAGKTYGLTKLPTDNQDFPSSPNQIKEMK.

The signal sequence occupies residues 1–13 (MFILLVLVTGVSA). At 14–355 (FTTPAVVHTG…FQSLHTTVKE (342 aa)) the chain is on the extracellular side. Ig-like C2-type domains follow at residues 29–136 (PVTS…LELK), 146–233 (PLVS…YNIT), and 249–357 (PVII…KEVS). Disulfide bonds link cysteine 42/cysteine 128, cysteine 64/cysteine 120, and cysteine 164/cysteine 219. N-linked (GlcNAc...) asparagine glycans are attached at residues asparagine 124, asparagine 208, asparagine 231, and asparagine 289. Cysteine 270 and cysteine 338 form a disulfide bridge. A helical membrane pass occupies residues 356 to 381 (VSSTFSWGIALAPLSLIILVVGAIWI). Topologically, residues 382-416 (RRRCKRQAGKTYGLTKLPTDNQDFPSSPNQIKEMK) are cytoplasmic. A disordered region spans residues 396-416 (TKLPTDNQDFPSSPNQIKEMK). Polar residues predominate over residues 399–416 (PTDNQDFPSSPNQIKEMK).

The protein belongs to the interleukin-1 receptor family. Associates with IL1RAP to form a non-signaling interleukin-1 receptor complex. In terms of processing, a soluble form (sIL1R2) can also be produced by proteolytic cleavage at the cell surface (shedding) involving a metalloproteinase.

It is found in the membrane. Its subcellular location is the cell membrane. The protein localises to the secreted. Non-signaling receptor for IL1A, IL1B and IL1RN. Reduces IL1B activities. Serves as a decoy receptor by competitive binding to IL1B and preventing its binding to IL1R1. Also modulates cellular response through non-signaling association with IL1RAP after binding to IL1B. IL1R2 (membrane and secreted forms) preferentially binds IL1B and poorly IL1A and IL1RN. The secreted IL1R2 recruits secreted IL1RAP with high affinity; this complex formation may be the dominant mechanism for neutralization of IL1B by secreted/soluble receptors. The sequence is that of Interleukin-1 receptor type 2 (Il1r2) from Rattus norvegicus (Rat).